A 500-amino-acid chain; its full sequence is Glutamyl-tRNA(Gln) amidotransferase subunit A (500 aa).

Catalysis depends on charge relay system residues Lys-93 and Ser-168. Residue Ser-192 is the Acyl-ester intermediate of the active site.

This sequence belongs to the amidase family. GatA subfamily. As to quaternary structure, heterotrimer of A, B and C subunits.

It catalyses the reaction L-glutamyl-tRNA(Gln) + L-glutamine + ATP + H2O = L-glutaminyl-tRNA(Gln) + L-glutamate + ADP + phosphate + H(+). Allows the formation of correctly charged Gln-tRNA(Gln) through the transamidation of misacylated Glu-tRNA(Gln) in organisms which lack glutaminyl-tRNA synthetase. The reaction takes place in the presence of glutamine and ATP through an activated gamma-phospho-Glu-tRNA(Gln). This chain is Glutamyl-tRNA(Gln) amidotransferase subunit A, found in Corynebacterium jeikeium (strain K411).